The following is a 59-amino-acid chain: Large ribosomal subunit protein uL30 (59 aa).

The protein belongs to the universal ribosomal protein uL30 family. As to quaternary structure, part of the 50S ribosomal subunit.

This Sodalis glossinidius (strain morsitans) protein is Large ribosomal subunit protein uL30.